The following is a 279-amino-acid chain: Putative ABC transporter ATP-binding protein CA_C1368 (279 aa).

The ABC transporter domain maps to 4–239 (ISINNVDYIY…KKVLRNINLR (236 aa)). 37–44 (GPNGAGKS) is an ATP binding site.

It belongs to the ABC transporter superfamily.

The protein resides in the cell membrane. Probably part of an ABC transporter complex. Responsible for energy coupling to the transport system. The polypeptide is Putative ABC transporter ATP-binding protein CA_C1368 (Clostridium acetobutylicum (strain ATCC 824 / DSM 792 / JCM 1419 / IAM 19013 / LMG 5710 / NBRC 13948 / NRRL B-527 / VKM B-1787 / 2291 / W)).